Here is a 219-residue protein sequence, read N- to C-terminus: Histone H1.11R (219 aa).

Low complexity-rich tracts occupy residues 1–20 and 28–40; these read MAETAPAAAPAAAPAPAAKA and AAGGAKARKPAGP. 2 disordered regions span residues 1 to 42 and 89 to 219; these read MAET…GPSV and LVSK…AKKK. The H15 domain occupies 38-111; it reads AGPSVTELIT…GASGSFRLSK (74 aa). Composition is skewed to basic residues over residues 121-135, 143-160, 168-183, and 192-219; these read PKKKASAAKPKKAAA, KKPKKAVAVKKSPKKAKK, KSVKSPKKAAKPKKAV, and KAVKPKAAKPKAAKPKAAKAKKAAAKKK.

It belongs to the histone H1/H5 family.

Its subcellular location is the nucleus. It localises to the chromosome. In terms of biological role, histones H1 are necessary for the condensation of nucleosome chains into higher-order structures. In Gallus gallus (Chicken), this protein is Histone H1.11R.